The following is a 1360-amino-acid chain: Ubiquitin carboxyl-terminal hydrolase 19 (1360 aa).

Positions 1 to 46 (MSAGASATGPRRGPPGLEEATSKKKQKDRANLESKDGDARRVSLPR) are disordered. At 1-1333 (MSAGASATGP…TTPDEGCLRY (1333 aa)) the chain is on the cytoplasmic side. Positions 28-46 (DRANLESKDGDARRVSLPR) are enriched in basic and acidic residues. Residues 51 to 140 (KDELLLDWRQ…VPLLTWPSLL (90 aa)) enclose the CS 1 domain. The segment at 163–239 (PIALEPGSEP…APSFLSDSAT (77 aa)) is disordered. The span at 170-181 (SEPRRAKQEARN) shows a compositional bias: basic and acidic residues. The span at 189–199 (GEVGSGAGPGT) shows a compositional bias: gly residues. The residue at position 220 (Ser220) is a Phosphoserine. A CS 2 domain is found at 322 to 424 (LAFVKNDSYE…RQSQRWGGLE (103 aa)). The disordered stretch occupies residues 432 to 482 (VGGAKVAVPTGPTPLDSTPPGGGPHPLTGQEEARAVEKEKPKARSEDSGLD). Over residues 462 to 478 (EEARAVEKEKPKARSED) the composition is skewed to basic and acidic residues. The 718-residue stretch at 539 to 1256 (TGLVNLGNTC…YAYVLFYRRR (718 aa)) folds into the USP domain. Cys548 serves as the catalytic Nucleophile. 8 residues coordinate Zn(2+): Cys833, Cys836, Cys850, Cys853, Cys859, Cys863, His871, and Cys875. The segment at 833-875 (CAACQRKQQSEEEKLKRCTRCYRVGYCNQFCQKTHWPDHKGLC) adopts an MYND-type zinc-finger fold. The segment at 965-988 (DTGAHRVWPPADRGPVPSTSGLSS) is disordered. His1207 serves as the catalytic Proton acceptor. The span at 1259 to 1274 (PVERPPRASHSEHHPD) shows a compositional bias: basic and acidic residues. The segment at 1259–1281 (PVERPPRASHSEHHPDLGPAAEA) is disordered. The helical transmembrane segment at 1334–1354 (FVLGTVAALVALVLNVFYPLV) threads the bilayer. Over 1355–1360 (SQSRWR) the chain is Lumenal.

As to quaternary structure, interacts with RNF123. Interacts with BIRC2/c-IAP1, BIRC3/c-IAP2 and XIAP/BIRC4. Interacts with HIF1A (via N-terminus).

It is found in the endoplasmic reticulum membrane. The catalysed reaction is Thiol-dependent hydrolysis of ester, thioester, amide, peptide and isopeptide bonds formed by the C-terminal Gly of ubiquitin (a 76-residue protein attached to proteins as an intracellular targeting signal).. Its function is as follows. Deubiquitinating enzyme that regulates the degradation of various proteins by removing ubiquitin moieties, thereby preventing their proteasomal degradation. Stabilizes RNF123, which promotes CDKN1B degradation and contributes to cell proliferation. Decreases the levels of ubiquitinated proteins during skeletal muscle formation and acts to repress myogenesis. Modulates transcription of major myofibrillar proteins. Also involved in turnover of endoplasmic-reticulum-associated degradation (ERAD) substrates. Mechanistically, deubiquitinates and thereby stabilizes several E3 ligases involved in the ERAD pathway including SYVN1 or MARCHF6. Regulates the stability of other E3 ligases including BIRC2/c-IAP1 and BIRC3/c-IAP2 by preventing their ubiquitination. Required for cells to mount an appropriate response to hypoxia by rescuing HIF1A from degradation in a non-catalytic manner and by mediating the deubiquitination of FUNDC1. Attenuates mitochondrial damage and ferroptosis by targeting and stabilizing NADPH oxidase 4/NOX4. Negatively regulates TNF-alpha- and IL-1beta-triggered NF-kappa-B activation by hydrolyzing 'Lys-27'- and 'Lys-63'-linked polyubiquitin chains from MAP3K7. Modulates also the protein level and aggregation of polyQ-expanded huntingtin/HTT through HSP90AA1. This Mus musculus (Mouse) protein is Ubiquitin carboxyl-terminal hydrolase 19 (Usp19).